The sequence spans 234 residues: 7-cyano-7-deazaguanine synthase (234 aa).

7-17 (LSGGLDSAVCM) is an ATP binding site. Residues Cys-197, Cys-208, Cys-211, and Cys-214 each contribute to the Zn(2+) site.

Belongs to the QueC family. Zn(2+) serves as cofactor.

The catalysed reaction is 7-carboxy-7-deazaguanine + NH4(+) + ATP = 7-cyano-7-deazaguanine + ADP + phosphate + H2O + H(+). Its pathway is purine metabolism; 7-cyano-7-deazaguanine biosynthesis. Catalyzes the ATP-dependent conversion of 7-carboxy-7-deazaguanine (CDG) to 7-cyano-7-deazaguanine (preQ(0)). In Methanococcus aeolicus (strain ATCC BAA-1280 / DSM 17508 / OCM 812 / Nankai-3), this protein is 7-cyano-7-deazaguanine synthase.